The following is a 1065-amino-acid chain: MPKRTDIETILVIGSGPIVIGQAAEFDYAGTQACLSLKEEGYRVILINSNPATIMTDTEIADKVYIEPISLDFVSRILRKERPDAILPTLGGQTGLNMAIELDKSGILDELGIEILGTKLDAIHKAEDRDLFRNLMYELGAPVPESDIIHSLDEAKRFVVKIGYPVIVRPAFTLGGTGGGICYNDQDLEEIVTSGLKYSPVTQCLLEKSIAGYKEIEYEVMRDAVDNAIVVCNMENVDPVGIHTGDSIVVAPTQTLSDRENQMLRNISLDIIRALKIEGGCNVQLALDPYSFNYYVIEVNPRVSRSSALASKATGYPIAKLAAKIAVGLTLDEIKNPVTGSTYACFEPALDYIVAKIPRWPFDKFESAKRNLGTQMKATGEVMALGRTFEEAMLKAVRSLETGQVHLELKHAEDNSDSWIEKRIRKAGDERLFFIGEALRRGVTIEQIHEWSAIDLFFLNKFKNIVDMEQTLADHKNDKEVLRTAKRLGFADKKIAELWDTTEEAIYAYRKEQGIIPVYKMVDTCAAEFESETPYFYGTYEEENESIKSEKPSVVVLGSGPIRIGQGVEFDYATVHSVWAIQEAGYEAIIINSNPETVSTDFSISDKLYFEPLTIEDVMHIIDLEQPIGVVVQFGGQTAINLADKLAANGVKILGTSLEDIDRAENRDKFEQALRDLNIPQPQGETAVSTVEALAIGERLGFPVLVRPSYVLGGRAMEIVYNQEELQHYMENAVEASPDHPVLVDRYLTGQEIEVDAICDGEHVLIPGIMEHIERAGVHSGDSISVYPPQKLTQYQKDTLVDYTTRLAKGLGIVGLMNIQYVISQGEVYVIEVNPRSSRTVPFLSKITNIPMANIATKAILGKSIVEQGYPTGLAPEQKGVFVKVPVFSFAKLRRVDITLGPEMKSTGEVMGKDATLEKALYKGLVAAGMEIRTEGTVLFTVSDKDKEEAIALAKRFSTVGYRIVATEGTAKAFEAAGVRTDVVGKIGAKGQTLIDLIQNGEAQLVVNTLTKGKQPARDGFRIRRESVENGVPCLTSLDTAEAMVRVIESMTFTAEEMPKAEVVH.

Residues 1–401 (MPKRTDIETI…AMLKAVRSLE (401 aa)) form a carboxyphosphate synthetic domain region. ATP-binding residues include R129, R169, G175, G176, K208, I210, E215, G241, I242, H243, Q284, and E298. The ATP-grasp 1 domain maps to 133 to 327 (RNLMYELGAP…IAKLAAKIAV (195 aa)). Mg(2+)-binding residues include Q284, E298, and N300. Residues Q284, E298, and N300 each contribute to the Mn(2+) site. The oligomerization domain stretch occupies residues 402–546 (TGQVHLELKH…YGTYEEENES (145 aa)). A carbamoyl phosphate synthetic domain region spans residues 547 to 929 (IKSEKPSVVV…ALYKGLVAAG (383 aa)). One can recognise an ATP-grasp 2 domain in the interval 671–861 (EQALRDLNIP…MANIATKAIL (191 aa)). ATP contacts are provided by R707, R746, L748, E752, G777, V778, H779, S780, Q820, and E832. The Mg(2+) site is built by Q820, E832, and N834. Mn(2+)-binding residues include Q820, E832, and N834. One can recognise an MGS-like domain in the interval 930–1065 (MEIRTEGTVL…EEMPKAEVVH (136 aa)). The interval 930–1065 (MEIRTEGTVL…EEMPKAEVVH (136 aa)) is allosteric domain.

The protein belongs to the CarB family. In terms of assembly, composed of two chains; the small (or glutamine) chain promotes the hydrolysis of glutamine to ammonia, which is used by the large (or ammonia) chain to synthesize carbamoyl phosphate. Tetramer of heterodimers (alpha,beta)4. Mg(2+) is required as a cofactor. Mn(2+) serves as cofactor.

It catalyses the reaction hydrogencarbonate + L-glutamine + 2 ATP + H2O = carbamoyl phosphate + L-glutamate + 2 ADP + phosphate + 2 H(+). The catalysed reaction is hydrogencarbonate + NH4(+) + 2 ATP = carbamoyl phosphate + 2 ADP + phosphate + 2 H(+). It participates in amino-acid biosynthesis; L-arginine biosynthesis; carbamoyl phosphate from bicarbonate: step 1/1. Its pathway is pyrimidine metabolism; UMP biosynthesis via de novo pathway; (S)-dihydroorotate from bicarbonate: step 1/3. Functionally, large subunit of the glutamine-dependent carbamoyl phosphate synthetase (CPSase). CPSase catalyzes the formation of carbamoyl phosphate from the ammonia moiety of glutamine, carbonate, and phosphate donated by ATP, constituting the first step of 2 biosynthetic pathways, one leading to arginine and/or urea and the other to pyrimidine nucleotides. The large subunit (synthetase) binds the substrates ammonia (free or transferred from glutamine from the small subunit), hydrogencarbonate and ATP and carries out an ATP-coupled ligase reaction, activating hydrogencarbonate by forming carboxy phosphate which reacts with ammonia to form carbamoyl phosphate. In Lysinibacillus sphaericus (strain C3-41), this protein is Carbamoyl phosphate synthase large chain.